Here is a 378-residue protein sequence, read N- to C-terminus: Putative F-box protein At5g51000 (378 aa).

The 47-residue stretch at methionine 1–histidine 47 folds into the F-box domain.

The chain is Putative F-box protein At5g51000 from Arabidopsis thaliana (Mouse-ear cress).